The following is a 131-amino-acid chain: Lysozyme C (131 aa).

The C-type lysozyme domain occupies 2–131 (KIYEQCELAR…VSQWIKGCKL (130 aa)). 4 cysteine pairs are disulfide-bonded: Cys7-Cys129, Cys31-Cys117, Cys66-Cys82, and Cys78-Cys96. Catalysis depends on residues Glu36 and Asp54.

This sequence belongs to the glycosyl hydrolase 22 family. Monomer.

It is found in the secreted. The enzyme catalyses Hydrolysis of (1-&gt;4)-beta-linkages between N-acetylmuramic acid and N-acetyl-D-glucosamine residues in a peptidoglycan and between N-acetyl-D-glucosamine residues in chitodextrins.. Its function is as follows. Lysozymes have primarily a bacteriolytic function; those in tissues and body fluids are associated with the monocyte-macrophage system and enhance the activity of immunoagents. Has strong bacteriolytic activity against M.luteus and V.cholerae, weak bacteriolytic activity against P.aeruginosa and no activity against A.hydrophila. The sequence is that of Lysozyme C (LYZ) from Pelodiscus sinensis (Chinese softshell turtle).